Consider the following 181-residue polypeptide: LEM domain-containing protein 1 (181 aa).

Positions 1–45 (MVDVKCLSDCKLQNQLEKLGFSPGPILPSTRKLYEKKLVQLLVSP) constitute an LEM domain. Residues 152–172 (FPVGLKLAVLGIFIIVVFVYL) traverse the membrane as a helical; Signal-anchor for type II membrane protein segment.

As to expression, testis-specific. Isoform 6 is detected in 17 of 18 colon cancer tissues examined.

The protein resides in the membrane. This Homo sapiens (Human) protein is LEM domain-containing protein 1 (LEMD1).